A 177-amino-acid polypeptide reads, in one-letter code: Peroxiredoxin-2 (177 aa).

N-acetylalanine is present on Ala2. Positions 6 to 164 (ARIGKPAPDF…ALRLVQAFQY (159 aa)) constitute a Thioredoxin domain. Cys51 serves as the catalytic Cysteine sulfenic acid (-SOH) intermediate. Residue Ser112 is modified to Phosphoserine.

The protein belongs to the peroxiredoxin family. AhpC/Prx1 subfamily. Homodimer; disulfide-linked, upon oxidation. 5 homodimers assemble to form a ring-like decamer. Interacts with TIPIN. In terms of processing, the enzyme can be inactivated by further oxidation of the cysteine sulfenic acid (C(P)-SOH) to sulphinic acid (C(P)-SO2H) instead of its condensation to a disulfide bond. It can be reactivated by forming a transient disulfide bond with sulfiredoxin SRXN1, which reduces the cysteine sulfinic acid in an ATP- and Mg-dependent manner. Acetylation increases resistance to transition to high molecular-mass complexes. Deacetylated by HDAC6 which decreases reducing activity.

The protein resides in the cytoplasm. It catalyses the reaction a hydroperoxide + [thioredoxin]-dithiol = an alcohol + [thioredoxin]-disulfide + H2O. Its function is as follows. Thiol-specific peroxidase that catalyzes the reduction of hydrogen peroxide and organic hydroperoxides to water and alcohols, respectively. Plays a role in cell protection against oxidative stress by detoxifying peroxides and as sensor of hydrogen peroxide-mediated signaling events. Might participate in the signaling cascades of growth factors and tumor necrosis factor-alpha by regulating the intracellular concentrations of H(2)O(2). In Pongo abelii (Sumatran orangutan), this protein is Peroxiredoxin-2 (PRDX2).